Consider the following 302-residue polypeptide: 5'-3' exonuclease (302 aa).

Residues 173–269 (IPKLIPDLLG…NITTKKIKML (97 aa)) enclose the 5'-3' exonuclease domain.

Its function is as follows. 5'-3' exonuclease acting preferentially on double-stranded DNA. The polypeptide is 5'-3' exonuclease (pol) (Buchnera aphidicola subsp. Baizongia pistaciae (strain Bp)).